A 648-amino-acid polypeptide reads, in one-letter code: Magnetosome protein MamZ (648 aa).

Residues 1–431 (MLEAWMPKSG…YAAWLLANGI (431 aa)) are major facilitator domain. 18 helical membrane passes run 28 to 49 (IIYL…IQPL), 69 to 87 (IQVV…FGLL), 94 to 113 (VRII…MSLL), 119 to 143 (LAFG…ADTV), 163 to 182 (LMGN…SAII), 188 to 207 (YKGG…IAGF), 252 to 273 (FYTR…ISVS), 285 to 305 (AHAA…IPLW), 317 to 335 (AIGA…LGMF), 341 to 361 (WLVA…FVTL), 373 to 395 (ILGA…LVQS), 407 to 428 (APFI…WLLA), 449 to 468 (PLVF…RSVI), 488 to 506 (YLGD…MRPV), 518 to 538 (YRRM…LAYV), 558 to 574 (FILL…PLAF), 595 to 612 (ATYV…LAAN), and 618 to 634 (PYVY…YRFY). A ferric reductase-like domain, required for correct magnetite crystal formation region spans residues 444–645 (KVDWKPLVFL…WRGGNVLRAL (202 aa)).

In the N-terminal section; belongs to the major facilitator superfamily. In terms of assembly, probably interacts with FtsZ-like and MamY proteins.

The protein localises to the magnetosome membrane. In terms of biological role, required for correct biomineralization of the magnetosome; probably converts and then transports some form of iron. It is partially functionally redundant with MamH. May function with MamX, MamY amd Mms6 in biomineralization. Despite its strong similarity to MsrQ (AC V6EX82) this protein does not genetically interact with bona fide MsrP (AC V6F0A4), which is encoded elsewhere in the genome. The polypeptide is Magnetosome protein MamZ (Magnetospirillum gryphiswaldense (strain DSM 6361 / JCM 21280 / NBRC 15271 / MSR-1)).